Reading from the N-terminus, the 477-residue chain is Serine/threonine-protein kinase prp4 (477 aa).

Residues 25 to 123 are disordered; that stretch reads KYQQTGNGHS…SPSVKRQNTG (99 aa). Basic and acidic residues predominate over residues 38-47; sequence IPEKKLKEDV. The segment covering 74-86 has biased composition (polar residues); sequence EGSNSNTKLDVTN. Residues 87–98 are compositionally biased toward low complexity; that stretch reads STTSDSPSIKSS. S92 is modified (phosphoserine). Over residues 113–123 the composition is skewed to polar residues; that stretch reads PSPSVKRQNTG. A Protein kinase domain is found at 159–477; it reads YIVQSNLGKG…ALKHPFFIKK (319 aa). ATP-binding positions include 165–173 and K188; that span reads LGKGMFSTV. The active-site Proton acceptor is the D286. Phosphotyrosine is present on Y320.

The protein belongs to the protein kinase superfamily. CMGC Ser/Thr protein kinase family.

It catalyses the reaction L-seryl-[protein] + ATP = O-phospho-L-seryl-[protein] + ADP + H(+). It carries out the reaction L-threonyl-[protein] + ATP = O-phospho-L-threonyl-[protein] + ADP + H(+). In terms of biological role, has a role in pre-mRNA splicing and is essential for growth. Phosphorylates srp1. This Schizosaccharomyces pombe (strain 972 / ATCC 24843) (Fission yeast) protein is Serine/threonine-protein kinase prp4 (prp4).